We begin with the raw amino-acid sequence, 289 residues long: MIILKRLLQDKGAVIALGIIVLYVFLGLAAPLVTFYDPNHIDTANKFAGISFQHLLGTDHLGRDILTRLIYAIRPSLLYVFVALFVSVLIGSILGFLSGYFQGFVDALIMRACDVMLAFPSYVVTLALIALFGMGAENIIMAFILTRWAWFCRVIRTSVMQYTASDHVRFAKTIGMNDMKIIHKHIMPLTLADIAIISSSSMCSMILQISGFSFLGLGVKAPTAEWGMMLNEARKVMFTHPEMMFAPGIAIVIIVMAFNFLSDALQIAIDPRISSKDKLRSVKKGVVQS.

5 consecutive transmembrane segments (helical) span residues 13–33, 77–97, 115–135, 194–214, and 249–269; these read AVIALGIIVLYVFLGLAAPLV, LLYVFVALFVSVLIGSILGFL, VMLAFPSYVVTLALIALFGMG, IAIISSSSMCSMILQISGFSF, and IAIVIIVMAFNFLSDALQIAI. Positions 73-262 constitute an ABC transmembrane type-1 domain; sequence IRPSLLYVFV…IIVMAFNFLS (190 aa).

This sequence belongs to the binding-protein-dependent transport system permease family. As to quaternary structure, the complex is composed of two ATP-binding proteins (CntD and CntF), two transmembrane proteins (CntB and CntC) and a solute-binding protein (CntA).

Its subcellular location is the cell membrane. Functionally, part of the ABC transporter complex CntABCDF (Opp1) involved in the uptake of metal in complex with the metallophore staphylopine (StP). May be involved in the import of a large array of divalent metals ions such as nickel, cobalt, zinc, copper and iron. Probably responsible for the translocation of the substrate across the membrane. In Staphylococcus aureus (strain Mu50 / ATCC 700699), this protein is Metal-staphylopine import system permease protein CntC.